Reading from the N-terminus, the 489-residue chain is Zinc finger protein 58 (489 aa).

The region spanning leucine 2–proline 73 is the KRAB domain. The segment at asparagine 78–arginine 100 adopts a C2H2-type 1; degenerate zinc-finger fold. C2H2-type zinc fingers lie at residues phenylalanine 106–histidine 128, tyrosine 134–histidine 156, tyrosine 162–histidine 184, tyrosine 190–histidine 212, tyrosine 218–histidine 240, tyrosine 246–histidine 268, tyrosine 274–histidine 296, cysteine 302–histidine 324, tyrosine 330–histidine 352, tyrosine 358–histidine 380, tyrosine 386–histidine 408, tyrosine 410–histidine 432, histidine 438–histidine 460, and tyrosine 466–histidine 488.

Belongs to the krueppel C2H2-type zinc-finger protein family. In terms of tissue distribution, expressed in liver, testis and, at considerably lower levels, in brain, spleen and heart.

Its subcellular location is the nucleus. In terms of biological role, may have a role during differentiation processes. This chain is Zinc finger protein 58 (Zfp58), found in Mus musculus (Mouse).